We begin with the raw amino-acid sequence, 755 residues long: Diamine oxidase [copper-containing] (755 aa).

Positions 1-24 (MGRGTLALGWAGAALLLLQMLAAA) are cleaved as a signal peptide. Asn115 is a glycosylation site (N-linked (GlcNAc...) asparagine). Cys182 and Cys186 are oxidised to a cystine. The active-site Proton acceptor is Asp376. A disulfide bond links Cys394 and Cys420. The Schiff-base intermediate with substrate; via topaquinone role is filled by Tyr464. At Tyr464 the chain carries 2',4',5'-topaquinone. Cu(2+)-binding residues include His513 and His515. Positions 522, 523, and 524 each coordinate Ca(2+). The N-linked (GlcNAc...) asparagine glycan is linked to Asn541. Residues Glu565, Phe656, Asn659, Glu661, Asp667, and Leu668 each contribute to the Ca(2+) site. His678 contacts Cu(2+). N-linked (GlcNAc...) asparagine glycosylation occurs at Asn749.

The protein belongs to the copper/topaquinone oxidase family. In terms of assembly, homodimer; disulfide-linked. Cu(2+) serves as cofactor. Requires Ca(2+) as cofactor. L-topaquinone is required as a cofactor. Post-translationally, topaquinone (TPQ) is generated by copper-dependent autoxidation of a specific tyrosyl residue. In terms of processing, N-glycosylated; the glycans are primarily linear, di-, or tribranched fucosylated complex type.

The protein resides in the secreted. Its subcellular location is the extracellular space. The protein localises to the cell membrane. It catalyses the reaction histamine + O2 + H2O = imidazole-4-acetaldehyde + H2O2 + NH4(+). It carries out the reaction N(tau)-methylhistamine + O2 + H2O = 1-methylimidazole-4-acetaldehyde + H2O2 + NH4(+). The catalysed reaction is putrescine + O2 + H2O = 4-aminobutanal + H2O2 + NH4(+). The enzyme catalyses cadaverine + O2 + H2O = 5-aminopentanal + H2O2 + NH4(+). With respect to regulation, inhibited by amiloride and amiloride analogs. Functionally, catalyzes the oxidative deamination of primary amines to the corresponding aldehydes with the concomitant production of hydrogen peroxide and ammonia. Its preferred substrates in vitro are the diamines histamine and 1-methylhistamine and it could therefore play a role in allergic and immune responses. Has a broad specificity for diamines and can also act on cadaverine and putrescine, two products of amino acid catabolism. It could also act on polyamines, like spermidine and spermine though less efficiently, and regulate various biological processes. The chain is Diamine oxidase [copper-containing] from Sus scrofa (Pig).